Consider the following 224-residue polypeptide: UPF0758 protein lwe1562 (224 aa).

The MPN domain maps to 102-224; it reads VIRCPDDAVK…YISLKEKGYF (123 aa). Zn(2+)-binding residues include H173, H175, and D186. The JAMM motif motif lies at 173 to 186; the sequence is HNHPSGDPTPSSED.

This sequence belongs to the UPF0758 family.

The sequence is that of UPF0758 protein lwe1562 from Listeria welshimeri serovar 6b (strain ATCC 35897 / DSM 20650 / CCUG 15529 / CIP 8149 / NCTC 11857 / SLCC 5334 / V8).